The primary structure comprises 290 residues: 33 kDa chaperonin (290 aa).

2 disulfide bridges follow: Cys236/Cys238 and Cys269/Cys272.

This sequence belongs to the HSP33 family. Under oxidizing conditions two disulfide bonds are formed involving the reactive cysteines. Under reducing conditions zinc is bound to the reactive cysteines and the protein is inactive.

It is found in the cytoplasm. Its function is as follows. Redox regulated molecular chaperone. Protects both thermally unfolding and oxidatively damaged proteins from irreversible aggregation. Plays an important role in the bacterial defense system toward oxidative stress. The protein is 33 kDa chaperonin of Acholeplasma laidlawii (strain PG-8A).